The primary structure comprises 469 residues: Sorting and assembly machinery component 50 homolog (469 aa).

One can recognise a POTRA domain in the interval 45–125 (VVVQHVHFDG…LDVTFEVTEL (81 aa)). Lys255 carries the N6-methyllysine modification.

It belongs to the SAM50/omp85 family. As to quaternary structure, associates with the mitochondrial contact site and cristae organizing system (MICOS) complex, composed of at least MICOS10/MIC10, CHCHD3/MIC19, CHCHD6/MIC25, APOOL/MIC27, IMMT/MIC60, APOO/MIC23/MIC26 and QIL1/MIC13. This complex was also known under the names MINOS or MitOS complex. The MICOS complex associates with mitochondrial outer membrane proteins SAMM50, MTX1 and MTX2 (together described as components of the mitochondrial outer membrane sorting assembly machinery (SAM) complex) and DNAJC11, mitochondrial inner membrane protein TMEM11 and with HSPA9. The MICOS and SAM complexes together with DNAJC11 are part of a large protein complex spanning both membranes termed the mitochondrial intermembrane space bridging (MIB) complex. Interacts with IMMT/MIC60. Interacts with CHCHD3/MIC19. Interacts with ARMC1. In terms of assembly, (Microbial infection) Interacts with parasite T.gondii RH strain MAF1b1; the interaction is probably indirect and results in the disruption of the MIB complex and the formation of SPOTs (structures positive for outer mitochondrial membrane (OMM)), a cellular response to OMM stress, which leads to the constitutive shedding of OMM vesicles.

Its subcellular location is the mitochondrion outer membrane. It localises to the cytoplasm. The protein resides in the mitochondrion. In terms of biological role, plays a crucial role in the maintenance of the structure of mitochondrial cristae and the proper assembly of the mitochondrial respiratory chain complexes. Required for the assembly of TOMM40 into the TOM complex. In Mus musculus (Mouse), this protein is Sorting and assembly machinery component 50 homolog (Samm50).